The primary structure comprises 97 residues: Serine protease inhibitor Kazal-type 8 (97 aa).

Positions 1–21 (MKGICSDAILVLATSMWMAFA) are cleaved as a signal peptide. In terms of domain architecture, Kazal-like spans 36–96 (DKTIVECLKN…TKLYDGQCEN (61 aa)). 3 disulfides stabilise this stretch: Cys42-Cys76, Cys49-Cys73, and Cys62-Cys94. An N-linked (GlcNAc...) asparagine glycan is attached at Asn85.

Its subcellular location is the secreted. Probable serine protease inhibitor. The sequence is that of Serine protease inhibitor Kazal-type 8 (SPINK8) from Homo sapiens (Human).